Consider the following 440-residue polypeptide: L-seryl-tRNA(Sec) selenium transferase (440 aa).

Position 282 is an N6-(pyridoxal phosphate)lysine (K282).

The protein belongs to the SelA family. Pyridoxal 5'-phosphate is required as a cofactor.

The protein resides in the cytoplasm. The enzyme catalyses L-seryl-tRNA(Sec) + selenophosphate + H(+) = L-selenocysteinyl-tRNA(Sec) + phosphate. The protein operates within aminoacyl-tRNA biosynthesis; selenocysteinyl-tRNA(Sec) biosynthesis; selenocysteinyl-tRNA(Sec) from L-seryl-tRNA(Sec) (bacterial route): step 1/1. Functionally, converts seryl-tRNA(Sec) to selenocysteinyl-tRNA(Sec) required for selenoprotein biosynthesis. The polypeptide is L-seryl-tRNA(Sec) selenium transferase (Campylobacter jejuni (strain RM1221)).